The sequence spans 141 residues: Ly6/PLAUR domain-containing protein 1 (141 aa).

The first 20 residues, 1-20 (MWVLGIAATFCGLFWLPGLA), serve as a signal peptide directing secretion. 6 cysteine pairs are disulfide-bonded: Cys25–Cys54, Cys28–Cys37, Cys46–Cys71, Cys77–Cys100, Cys88–Cys97, and Cys101–Cys106. In terms of domain architecture, UPAR/Ly6 spans 25-108 (CYQCEEFQLN…SCCNTPLCNG (84 aa)). Asn45 carries N-linked (GlcNAc...) asparagine glycosylation. Gly115 carries the GPI-anchor amidated glycine lipid modification. The propeptide at 116 to 141 (SSASAIRPELFTTVLFFNLALCLAHC) is removed in mature form.

Interacts with CHRNA4 and nAChRs containing alpha-4:beta-2 (CHRNA4:CHRNB2) and alpha-7 (CHRNA7) subunits.

The protein resides in the cell membrane. Functionally, believed to act as a modulator of nicotinic acetylcholine receptors (nAChRs) activity. In vitro increases receptor desensitization and decreases affinity for ACh of alpha-4:beta-2-containing nAChRs. May play a role in the intracellular trafficking of alpha-4:beta-2 and alpha-7-containing nAChRs and may inhibit their expression at the cell surface. May be involved in the control of anxiety. This chain is Ly6/PLAUR domain-containing protein 1 (Lypd1), found in Rattus norvegicus (Rat).